A 250-amino-acid polypeptide reads, in one-letter code: MEIDLNADLGEGCGSDEALLDLVSSANIACGWHAGGPNAMRECVRWAVEKGVSIGAHPSFNDPENFGRKEMDLPAGEIYAGVLYQLGALSAIAQAEGGRIAHVKPHGALYNQAARDPKIADAIVSAVHDFDPSVAVFALANSGLVTAARNAGLVAIEEVFADRGYRADGSLVPRKEPGAMLDDEDEVLARTLTMVREQRVQALSGEWVPLNAQTICLHGDGPHALAFARRIRNALEAAGIGVHAANAVRV.

This sequence belongs to the LamB/PxpA family. In terms of assembly, forms a complex composed of PxpA, PxpB and PxpC.

It catalyses the reaction 5-oxo-L-proline + ATP + 2 H2O = L-glutamate + ADP + phosphate + H(+). Catalyzes the cleavage of 5-oxoproline to form L-glutamate coupled to the hydrolysis of ATP to ADP and inorganic phosphate. This Paraburkholderia phymatum (strain DSM 17167 / CIP 108236 / LMG 21445 / STM815) (Burkholderia phymatum) protein is 5-oxoprolinase subunit A.